The following is a 121-amino-acid chain: Basic phospholipase A2 homolog piratoxin-1 (121 aa).

Disulfide bonds link C26/C115, C28/C44, C43/C95, C49/C121, C50/C88, C57/C81, and C75/C86. Residues 105-117 (KLYRYHLKPFCKK) form an important for membrane-damaging activities in eukaryotes and bacteria; heparin-binding region.

The protein belongs to the phospholipase A2 family. Group II subfamily. K49 sub-subfamily. Homodimer; non-covalently linked. In terms of tissue distribution, expressed by the venom gland.

Its subcellular location is the secreted. Rosmarinic acid inhibits the myotoxic activity. Bromophenacyl bromide (BPB) inhibits the myotoxic activity through a covalent binding. Caffeic acid and aristolochic acid, two plant compounds used in folk medicine used to treat envenomation, inhibit the myotoxic activity. Its function is as follows. Snake venom phospholipase A2 (PLA2) homolog that lacks enzymatic activity. Is myotoxic and displays edema-inducing activities. Induces neuromuscular blockage. A model of myotoxic mechanism has been proposed: an apo Lys49-PLA2 is activated by the entrance of a hydrophobic molecule (e.g. fatty acid) at the hydrophobic channel of the protein leading to a reorientation of a monomer. This reorientation causes a transition between 'inactive' to 'active' states, causing alignment of C-terminal and membrane-docking sites (MDoS) side-by-side and putting the membrane-disruption sites (MDiS) in the same plane, exposed to solvent and in a symmetric position for both monomers. The MDoS region stabilizes the toxin on membrane by the interaction of charged residues with phospholipid head groups. Subsequently, the MDiS region destabilizes the membrane with penetration of hydrophobic residues. This insertion causes a disorganization of the membrane, allowing an uncontrolled influx of ions (i.e. calcium and sodium), and eventually triggering irreversible intracellular alterations and cell death. The sequence is that of Basic phospholipase A2 homolog piratoxin-1 from Bothrops pirajai (Piraja's lancehead).